Here is a 401-residue protein sequence, read N- to C-terminus: L-rhamnonate dehydratase (401 aa).

Residues histidine 29 and arginine 55 each contribute to the substrate site. Residues aspartate 222, glutamate 248, and glutamate 276 each contribute to the Mg(2+) site. Residue histidine 325 is the Proton acceptor of the active site. Position 345 (glutamate 345) interacts with substrate.

This sequence belongs to the mandelate racemase/muconate lactonizing enzyme family. RhamD subfamily. As to quaternary structure, homooctamer; tetramer of dimers. Mg(2+) is required as a cofactor.

The enzyme catalyses L-rhamnonate = 2-dehydro-3-deoxy-L-rhamnonate + H2O. Its function is as follows. Catalyzes the dehydration of L-rhamnonate to 2-keto-3-deoxy-L-rhamnonate (KDR). The protein is L-rhamnonate dehydratase of Klebsiella pneumoniae subsp. pneumoniae (strain ATCC 700721 / MGH 78578).